Here is a 319-residue protein sequence, read N- to C-terminus: Acetyl-coenzyme A carboxylase carboxyl transferase subunit alpha (319 aa).

Residues 35 to 296 (DLDKEIKQLE…KQRLIEQLNE (262 aa)) form the CoA carboxyltransferase C-terminal domain.

It belongs to the AccA family. Acetyl-CoA carboxylase is a heterohexamer composed of biotin carboxyl carrier protein (AccB), biotin carboxylase (AccC) and two subunits each of ACCase subunit alpha (AccA) and ACCase subunit beta (AccD).

It is found in the cytoplasm. It carries out the reaction N(6)-carboxybiotinyl-L-lysyl-[protein] + acetyl-CoA = N(6)-biotinyl-L-lysyl-[protein] + malonyl-CoA. It participates in lipid metabolism; malonyl-CoA biosynthesis; malonyl-CoA from acetyl-CoA: step 1/1. Its function is as follows. Component of the acetyl coenzyme A carboxylase (ACC) complex. First, biotin carboxylase catalyzes the carboxylation of biotin on its carrier protein (BCCP) and then the CO(2) group is transferred by the carboxyltransferase to acetyl-CoA to form malonyl-CoA. The protein is Acetyl-coenzyme A carboxylase carboxyl transferase subunit alpha of Aliivibrio salmonicida (strain LFI1238) (Vibrio salmonicida (strain LFI1238)).